The primary structure comprises 354 residues: Selenide, water dikinase (354 aa).

Residue C23 is part of the active site. ATP is bound by residues K26 and 54–56 (TSD). Mg(2+) is bound at residue D57. ATP contacts are provided by residues D74, D97, and 145–147 (GHS). Mg(2+) is bound at residue D97. Residue D233 participates in Mg(2+) binding.

It belongs to the selenophosphate synthase 1 family. Class I subfamily. As to quaternary structure, homodimer. Requires Mg(2+) as cofactor.

The enzyme catalyses hydrogenselenide + ATP + H2O = selenophosphate + AMP + phosphate + 2 H(+). Synthesizes selenophosphate from selenide and ATP. This is Selenide, water dikinase from Burkholderia ambifaria (strain MC40-6).